A 618-amino-acid polypeptide reads, in one-letter code: Tyrosine-protein kinase ZAP-70 (618 aa).

Positions 10–102 constitute an SH2 1 domain; it reads FFYGSISRAE…GLPCNLRKPC (93 aa). Residues 103-162 form an interdomain A region; the sequence is NRPPGLEPQPGVFDCLRDAMVRDYVRQTWKLEGDALEQAIISQAPQVEKLIATTAHERMP. The 92-residue stretch at 163 to 254 folds into the SH2 2 domain; sequence WYHSSLTREE…GLIYRLKEVC (92 aa). At Y248 the chain carries Phosphotyrosine. An interdomain B region spans residues 255 to 336; sequence PNSSASAAVA…KKLFLKRENL (82 aa). The segment at 270-320 is disordered; it reads AHPSTFTQPQRRVDTLNSDGYTPEPARLASSTDKPRPMPMDTSVYESPYSD. Over residues 273–289 the composition is skewed to polar residues; sequence STFTQPQRRVDTLNSDG. At S287 the chain carries Phosphoserine. Y290 carries the phosphotyrosine modification. Phosphotyrosine; by LCK is present on Y314. Y318 carries the phosphotyrosine modification. Residues 337–597 form the Protein kinase domain; it reads LVADIELGCG…VEQRMRNYYY (261 aa). Residues 343 to 351 and K368 contribute to the ATP site; that span reads LGCGNFGSV. D460 acts as the Proton acceptor in catalysis. Y491 and Y492 each carry phosphotyrosine. A Glycyl lysine isopeptide (Lys-Gly) (interchain with G-Cter in ubiquitin) cross-link involves residue K543.

This sequence belongs to the protein kinase superfamily. Tyr protein kinase family. SYK/ZAP-70 subfamily. Interacts with CD247/CD3Z; this interaction docks ZAP70 at the stimulated TCR. Interacts with NFAM1. Interacts with adapter protein SLA; this interaction negatively regulates T-cell receptor signaling. Interacts with VAV1. Interacts with CBL; this interaction promotes ubiquitination, internalization and subsequent degradation of CD247/CD3Z. Identified in a complex with CBL and UBE2L3. Interacts with SHB. Interacts with adapter protein SLA2; this interaction negatively regulates T-cell receptor signaling. Interacts with CBLB. Interacts (via SH2 domains) with RHOH; this interaction regulates ZAP70 subcellular localization. Interacts with DEF6. Interacts (ubiquitinated form) with OTUD7B and UBASH3B. Phosphorylated on tyrosine residues upon T-cell antigen receptor (TCR) stimulation. Phosphorylation of Tyr-314 and Tyr-314 are essential for ZAP70 positive function on T-lymphocyte activation whereas Tyr-290 has a negative regulatory role. Within the C-terminal kinase domain, Tyr-491 and Tyr-492 are phosphorylated after TCR induction, Tyr-491 playing a negative regulatory role and Tyr-492 a positive. Tyr-492 is dephosphorylated by PTN22. In terms of processing, ubiquitinated in response to T cell activation. Deubiquitinated by OTUD7B. In terms of tissue distribution, isoform 1 and isoform 2 are expressed in thymus, spleen and lymph nodes.

It is found in the cytoplasm. The protein resides in the cell membrane. It catalyses the reaction L-tyrosyl-[protein] + ATP = O-phospho-L-tyrosyl-[protein] + ADP + H(+). With respect to regulation, activated by phosphorylation at Tyr-492 in the activation loop. Functionally, tyrosine kinase that plays an essential role in regulation of the adaptive immune response. Regulates motility, adhesion and cytokine expression of mature T-cells, as well as thymocyte development. Also contributes to the development and activation of primary B-lymphocytes. When antigen presenting cells (APC) activate T-cell receptor (TCR), a serie of phosphorylations lead to the recruitment of ZAP70 to the doubly phosphorylated TCR component CD3Z through ITAM motif at the plasma membrane. This recruitment serves to localization to the stimulated TCR and to relieve its autoinhibited conformation. Release of ZAP70 active conformation is further stabilized by phosphorylation mediated by LCK. Subsequently, ZAP70 phosphorylates at least 2 essential adapter proteins: LAT and LCP2. In turn, a large number of signaling molecules are recruited and ultimately lead to lymphokine production, T-cell proliferation and differentiation. Furthermore, ZAP70 controls cytoskeleton modifications, adhesion and mobility of T-lymphocytes, thus ensuring correct delivery of effectors to the APC. ZAP70 is also required for TCR-CD3Z internalization and degradation through interaction with the E3 ubiquitin-protein ligase CBL and adapter proteins SLA and SLA2. Thus, ZAP70 regulates both T-cell activation switch on and switch off by modulating TCR expression at the T-cell surface. During thymocyte development, ZAP70 promotes survival and cell-cycle progression of developing thymocytes before positive selection (when cells are still CD4/CD8 double negative). Additionally, ZAP70-dependent signaling pathway may also contribute to primary B-cells formation and activation through B-cell receptor (BCR). In Mus musculus (Mouse), this protein is Tyrosine-protein kinase ZAP-70 (Zap70).